Reading from the N-terminus, the 453-residue chain is tRNA modification GTPase MnmE (453 aa).

(6S)-5-formyl-5,6,7,8-tetrahydrofolate is bound by residues R22, E79, and K119. In terms of domain architecture, TrmE-type G spans 215-376 (GMKVVIAGRP…LKQHLKSLMG (162 aa)). N225 serves as a coordination point for K(+). GTP is bound by residues 225-230 (NAGKSS), 244-250 (TEIAGTT), 269-272 (DTAG), and 334-337 (NKAD). Position 229 (S229) interacts with Mg(2+). K(+) contacts are provided by T244, I246, and T249. T250 is a Mg(2+) binding site. K453 contacts (6S)-5-formyl-5,6,7,8-tetrahydrofolate.

This sequence belongs to the TRAFAC class TrmE-Era-EngA-EngB-Septin-like GTPase superfamily. TrmE GTPase family. As to quaternary structure, homodimer. Heterotetramer of two MnmE and two MnmG subunits. The cofactor is K(+).

Its subcellular location is the cytoplasm. Exhibits a very high intrinsic GTPase hydrolysis rate. Involved in the addition of a carboxymethylaminomethyl (cmnm) group at the wobble position (U34) of certain tRNAs, forming tRNA-cmnm(5)s(2)U34. This chain is tRNA modification GTPase MnmE, found in Shewanella pealeana (strain ATCC 700345 / ANG-SQ1).